The chain runs to 228 residues: L-ribulose-5-phosphate 4-epimerase UlaF (228 aa).

Substrate contacts are provided by residues G26 to N27, S43 to G44, and S72 to S73. Positions 74, 93, and 95 each coordinate Zn(2+). The Proton donor/acceptor role is filled by D118. Position 167 (H167) interacts with Zn(2+). Y225 (proton donor/acceptor) is an active-site residue.

This sequence belongs to the aldolase class II family. AraD/FucA subfamily. Requires Zn(2+) as cofactor.

The enzyme catalyses L-ribulose 5-phosphate = D-xylulose 5-phosphate. It participates in cofactor degradation; L-ascorbate degradation; D-xylulose 5-phosphate from L-ascorbate: step 4/4. In terms of biological role, catalyzes the isomerization of L-ribulose 5-phosphate to D-xylulose 5-phosphate. Is involved in the anaerobic L-ascorbate utilization. The sequence is that of L-ribulose-5-phosphate 4-epimerase UlaF from Escherichia coli O6:K15:H31 (strain 536 / UPEC).